The primary structure comprises 295 residues: Uridine and thymidine phosphorylase (295 aa).

Residues R81 and 125-128 (RLGT) contribute to the phosphate site. The substrate site is built by Q203 and R205.

The protein belongs to the PNP/UDP phosphorylase family. Expressed in hypodermis, pharynx, spermatheca and gonad.

The catalysed reaction is uridine + phosphate = alpha-D-ribose 1-phosphate + uracil. The enzyme catalyses thymidine + phosphate = 2-deoxy-alpha-D-ribose 1-phosphate + thymine. It carries out the reaction 2'-deoxyuridine + phosphate = 2-deoxy-alpha-D-ribose 1-phosphate + uracil. The protein operates within pyrimidine metabolism; UMP biosynthesis via salvage pathway; uracil from uridine (phosphorylase route): step 1/1. It participates in pyrimidine metabolism; dTMP biosynthesis via salvage pathway; dTMP from thymine: step 1/2. Catalyzes the reversible phosphorylytic cleavage of uridine and thymidine to uracil and ribose-phosphate or thymine and deoxyribose-1-phosphate. The produced molecules are then utilized as carbon and energy sources or in the rescue of pyrimidine bases for nucleotide synthesis. Required for normal lifespan. The protein is Uridine and thymidine phosphorylase of Caenorhabditis elegans.